The sequence spans 430 residues: Gamma-glutamyl phosphate reductase (430 aa).

It belongs to the gamma-glutamyl phosphate reductase family.

It localises to the cytoplasm. The catalysed reaction is L-glutamate 5-semialdehyde + phosphate + NADP(+) = L-glutamyl 5-phosphate + NADPH + H(+). It participates in amino-acid biosynthesis; L-proline biosynthesis; L-glutamate 5-semialdehyde from L-glutamate: step 2/2. Catalyzes the NADPH-dependent reduction of L-glutamate 5-phosphate into L-glutamate 5-semialdehyde and phosphate. The product spontaneously undergoes cyclization to form 1-pyrroline-5-carboxylate. The protein is Gamma-glutamyl phosphate reductase of Corynebacterium diphtheriae (strain ATCC 700971 / NCTC 13129 / Biotype gravis).